The chain runs to 439 residues: Proline--tRNA ligase (439 aa).

The protein belongs to the class-II aminoacyl-tRNA synthetase family. ProS type 2 subfamily. As to quaternary structure, homodimer.

The protein localises to the cytoplasm. It catalyses the reaction tRNA(Pro) + L-proline + ATP = L-prolyl-tRNA(Pro) + AMP + diphosphate. Catalyzes the attachment of proline to tRNA(Pro) in a two-step reaction: proline is first activated by ATP to form Pro-AMP and then transferred to the acceptor end of tRNA(Pro). The protein is Proline--tRNA ligase of Parvibaculum lavamentivorans (strain DS-1 / DSM 13023 / NCIMB 13966).